The primary structure comprises 308 residues: Oxygen-dependent coproporphyrinogen-III oxidase (308 aa).

S100 contributes to the substrate binding site. The a divalent metal cation site is built by H104 and H114. The Proton donor role is filled by H114. 116-118 (NFR) contacts substrate. Residues H153 and H183 each coordinate a divalent metal cation. The important for dimerization stretch occupies residues 248-283 (YVEFNLVFDRGTIFGLQSGGRTESILSSMPPMASWR). 266–268 (GGR) contacts substrate.

This sequence belongs to the aerobic coproporphyrinogen-III oxidase family. As to quaternary structure, homodimer. Requires a divalent metal cation as cofactor.

It is found in the cytoplasm. The catalysed reaction is coproporphyrinogen III + O2 + 2 H(+) = protoporphyrinogen IX + 2 CO2 + 2 H2O. It participates in porphyrin-containing compound metabolism; protoporphyrin-IX biosynthesis; protoporphyrinogen-IX from coproporphyrinogen-III (O2 route): step 1/1. Functionally, involved in the heme biosynthesis. Catalyzes the aerobic oxidative decarboxylation of propionate groups of rings A and B of coproporphyrinogen-III to yield the vinyl groups in protoporphyrinogen-IX. This chain is Oxygen-dependent coproporphyrinogen-III oxidase, found in Francisella tularensis subsp. novicida (strain U112).